Reading from the N-terminus, the 204-residue chain is Methylthioribulose-1-phosphate dehydratase (204 aa).

Zn(2+) is bound by residues His96 and His98.

The protein belongs to the aldolase class II family. MtnB subfamily. Requires Zn(2+) as cofactor.

It carries out the reaction 5-(methylsulfanyl)-D-ribulose 1-phosphate = 5-methylsulfanyl-2,3-dioxopentyl phosphate + H2O. The protein operates within amino-acid biosynthesis; L-methionine biosynthesis via salvage pathway; L-methionine from S-methyl-5-thio-alpha-D-ribose 1-phosphate: step 2/6. Catalyzes the dehydration of methylthioribulose-1-phosphate (MTRu-1-P) into 2,3-diketo-5-methylthiopentyl-1-phosphate (DK-MTP-1-P). This is Methylthioribulose-1-phosphate dehydratase from Methylococcus capsulatus (strain ATCC 33009 / NCIMB 11132 / Bath).